Consider the following 301-residue polypeptide: Phosphatidylcholine:diacylglycerol cholinephosphotransferase 1 (301 aa).

The segment at 1–39 (MSAAAAETDVSLRRRSNSLNGNHTNGVAIDGTLDNNNRR) is disordered. The next 5 membrane-spanning stretches (helical) occupy residues 88–108 (HWIP…EYTL), 141–161 (VLAA…VWTW), 171–191 (IAAL…QLPL), 202–222 (FPVG…GSMI), and 255–275 (GHYT…DSLA). Residues H216, H256, and D260 contribute to the active site.

The protein belongs to the phosphatidylcholine:diacylglycerol cholinephosphotransferase family.

It is found in the membrane. The enzyme catalyses 1,2-ditetradecanoyl-sn-glycero-3-phosphocholine + 1,2-di-(9Z-octadecenoyl)-sn-glycerol = 1,2-ditetradecanoyl-sn-glycerol + 1,2-di-(9Z-octadecenoyl)-sn-glycero-3-phosphocholine. In terms of biological role, functions as a phosphatidylcholine:diacylglycerol cholinephosphotransferase that catalyzes the transfer of the phosphocholine headgroup from phosphatidylcholine (PC) to diacylglycerol, a major reaction for the transfer of 18:1 into phosphatidylcholine for desaturation and also for the reverse transfer of 18:2 and 18:3 into the triacylglycerols synthesis pathway. The polypeptide is Phosphatidylcholine:diacylglycerol cholinephosphotransferase 1 (Arabidopsis thaliana (Mouse-ear cress)).